The sequence spans 175 residues: Viral interleukin-10 homolog (175 aa).

Residues 1 to 19 (MLSVMVSSSLVLIVFFLGA) form the signal peptide. 2 disulfide bridges follow: Cys37–Cys127 and Cys81–Cys132. Asn151 carries an N-linked (GlcNAc...) asparagine; by host glycan.

The protein belongs to the IL-10 family. Homodimer; disulfide-linked.

The protein resides in the secreted. Its function is as follows. Functional viral IL-10 homolog. Can bind to the human IL-10 receptor and compete with human IL-10 for binding sites. Requires both subunits of the human IL-10 receptor complex to induce signal transduction events and biological activities. IL-10 signaling pathway has several immunosuppressive activities that are exploited by the virus. Inhibits TLR-induced type I interferon production in host plasmacytoid dendritic cells. The polypeptide is Viral interleukin-10 homolog (UL111A) (Human cytomegalovirus (strain AD169) (HHV-5)).